A 266-amino-acid polypeptide reads, in one-letter code: MNWAFLQGLLSGVNKYSTVLSRIWLSVVFIFRVLVYVVAAEEVWDDEQKDFVCNTKQPGCPNVCYDEFFPVSHVRLWALQLILVTCPSLLVVMHVAYREERERKHHLKHGPNAPSLYDNLSKKRGGLWWTYLLSLIFKAAVDAGFLYIFHRLYKDYDMPRVVACSVEPCPHTVDCYISRPTEKKVFTYFMVTTAAICILLNLSEVFYLVGKRCMEIFGPRHRRPRCRECLPDTCPPYVLSQGGHPEDGNSVLMKAGSAPVDAGGYP.

The stretch at 2 to 13 is an intramembrane region; the sequence is NWAFLQGLLSGV. Topologically, residues 14-20 are cytoplasmic; sequence NKYSTVL. Residues 21-40 traverse the membrane as a helical segment; that stretch reads SRIWLSVVFIFRVLVYVVAA. Residues 41–73 are Extracellular-facing; sequence EEVWDDEQKDFVCNTKQPGCPNVCYDEFFPVSH. 3 cysteine pairs are disulfide-bonded: Cys53-Cys175, Cys60-Cys169, and Cys64-Cys164. Residues 74–94 traverse the membrane as a helical segment; the sequence is VRLWALQLILVTCPSLLVVMH. At 95–130 the chain is on the cytoplasmic side; it reads VAYREERERKHHLKHGPNAPSLYDNLSKKRGGLWWT. Residues 131–151 traverse the membrane as a helical segment; that stretch reads YLLSLIFKAAVDAGFLYIFHR. Residues 152–184 are Extracellular-facing; it reads LYKDYDMPRVVACSVEPCPHTVDCYISRPTEKK. The chain crosses the membrane as a helical span at residues 185–205; sequence VFTYFMVTTAAICILLNLSEV. The Cytoplasmic segment spans residues 206–266; that stretch reads FYLVGKRCME…SAPVDAGGYP (61 aa).

The protein belongs to the connexin family. Beta-type (group I) subfamily. In terms of assembly, a hemichannel or connexon is composed of a hexamer of connexins. A functional gap junction is formed by the apposition of two hemichannels. Forms heteromeric channels with GJB2.

Its subcellular location is the cell membrane. The protein localises to the cell junction. The protein resides in the gap junction. Its function is as follows. Structural component of gap junctions. Gap junctions are dodecameric channels that connect the cytoplasm of adjoining cells. They are formed by the docking of two hexameric hemichannels, one from each cell membrane. Small molecules and ions diffuse from one cell to a neighboring cell via the central pore. In Homo sapiens (Human), this protein is Gap junction beta-4 protein (GJB4).